Here is a 343-residue protein sequence, read N- to C-terminus: Cyclic AMP-AMP-AMP synthase (343 aa).

Belongs to the CD-NTase family. D01 subfamily. Requires Mg(2+) as cofactor.

It catalyses the reaction 3 ATP = 2',3',3'-c-tri-AMP + 3 diphosphate. In terms of biological role, cyclic nucleotide synthase (second messenger synthase) of a CBASS antivirus system. CBASS (cyclic oligonucleotide-based antiphage signaling system) provides immunity against bacteriophage. The CD-NTase protein synthesizes cyclic nucleotides in response to infection; these serve as specific second messenger signals. The signals activate a diverse range of effectors, leading to bacterial cell death and thus abortive phage infection. A type II-C(AAAA) CBASS system. Functionally, cyclic trinucleotide synthase that catalyzes the synthesis of 2',3',3'-cyclic AMP-AMP-AMP (2',3',3'-c-tri-AMP or 2'3'3'-cAAA) as the major product, as well as another cyclic AMP(4) 2'-5'-linked minor product that acts as a second messenger for cell signal transduction. The chain is Cyclic AMP-AMP-AMP synthase from Acinetobacter sp. (strain ATCC 27244 / 9458).